The following is a 525-amino-acid chain: EGF domain-specific O-linked N-acetylglucosamine transferase (525 aa).

Residues 1 to 24 (MVPLRLVLLLHIIHFSCENEVGSA) form the signal peptide. The short motif at 293–295 (DYE) is the Required for optimal activity element. An N-linked (GlcNAc...) asparagine glycan is attached at Asn352. A Prevents secretion from ER motif is present at residues 522–525 (RDEL).

Belongs to the glycosyltransferase 61 family.

The protein resides in the endoplasmic reticulum lumen. It catalyses the reaction L-seryl-[protein] + UDP-N-acetyl-alpha-D-glucosamine = 3-O-(N-acetyl-beta-D-glucosaminyl)-L-seryl-[protein] + UDP + H(+). The catalysed reaction is L-threonyl-[protein] + UDP-N-acetyl-alpha-D-glucosamine = 3-O-(N-acetyl-beta-D-glucosaminyl)-L-threonyl-[protein] + UDP + H(+). Functionally, catalyzes the transfer of a single N-acetylglucosamine from UDP-GlcNAc to a serine or threonine residue in extracellular proteins resulting in their modification with a beta-linked N-acetylglucosamine (O-GlcNAc). Specifically glycosylates the Thr residue located between the fifth and sixth conserved cysteines of folded EGF-like domains. The chain is EGF domain-specific O-linked N-acetylglucosamine transferase (eogt) from Xenopus laevis (African clawed frog).